We begin with the raw amino-acid sequence, 729 residues long: Polyribonucleotide nucleotidyltransferase (729 aa).

The Mg(2+) site is built by aspartate 485 and aspartate 491. In terms of domain architecture, KH spans 552 to 611 (PRITTMKVAEDKIRTIIGKGGATIKGLIESTGVSIDIDDSGVIQLFSPDKMALEEAQKQI). One can recognise an S1 motif domain in the interval 621 to 689 (GQTYQGKVSK…KQGRVKLEWK (69 aa)).

Belongs to the polyribonucleotide nucleotidyltransferase family. As to quaternary structure, component of the RNA degradosome, which is a multiprotein complex involved in RNA processing and mRNA degradation. Requires Mg(2+) as cofactor.

It localises to the cytoplasm. It carries out the reaction RNA(n+1) + phosphate = RNA(n) + a ribonucleoside 5'-diphosphate. In terms of biological role, involved in mRNA degradation. Catalyzes the phosphorolysis of single-stranded polyribonucleotides processively in the 3'- to 5'-direction. The sequence is that of Polyribonucleotide nucleotidyltransferase from Legionella pneumophila (strain Corby).